A 394-amino-acid chain; its full sequence is Phosphoglycerate kinase (394 aa).

Residues 21 to 23, R36, 59 to 62, R118, and R151 contribute to the substrate site; these read DFN and HLGR. Residue S183 is modified to Phosphoserine. Residue K201 coordinates ATP. Position 299 is a phosphothreonine (T299). Residues E323 and 350–353 contribute to the ATP site; that span reads GGDS.

This sequence belongs to the phosphoglycerate kinase family. As to quaternary structure, monomer.

The protein resides in the cytoplasm. It carries out the reaction (2R)-3-phosphoglycerate + ATP = (2R)-3-phospho-glyceroyl phosphate + ADP. It functions in the pathway carbohydrate degradation; glycolysis; pyruvate from D-glyceraldehyde 3-phosphate: step 2/5. The chain is Phosphoglycerate kinase from Halalkalibacterium halodurans (strain ATCC BAA-125 / DSM 18197 / FERM 7344 / JCM 9153 / C-125) (Bacillus halodurans).